Reading from the N-terminus, the 417-residue chain is Serine hydroxymethyltransferase (417 aa).

(6S)-5,6,7,8-tetrahydrofolate-binding positions include Leu121 and 125–127 (GHL). An N6-(pyridoxal phosphate)lysine modification is found at Lys229. 355-357 (SPF) contributes to the (6S)-5,6,7,8-tetrahydrofolate binding site.

This sequence belongs to the SHMT family. In terms of assembly, homodimer. Requires pyridoxal 5'-phosphate as cofactor.

Its subcellular location is the cytoplasm. It carries out the reaction (6R)-5,10-methylene-5,6,7,8-tetrahydrofolate + glycine + H2O = (6S)-5,6,7,8-tetrahydrofolate + L-serine. It functions in the pathway one-carbon metabolism; tetrahydrofolate interconversion. Its pathway is amino-acid biosynthesis; glycine biosynthesis; glycine from L-serine: step 1/1. Functionally, catalyzes the reversible interconversion of serine and glycine with tetrahydrofolate (THF) serving as the one-carbon carrier. This reaction serves as the major source of one-carbon groups required for the biosynthesis of purines, thymidylate, methionine, and other important biomolecules. Also exhibits THF-independent aldolase activity toward beta-hydroxyamino acids, producing glycine and aldehydes, via a retro-aldol mechanism. The sequence is that of Serine hydroxymethyltransferase from Xanthomonas euvesicatoria pv. vesicatoria (strain 85-10) (Xanthomonas campestris pv. vesicatoria).